The chain runs to 300 residues: MKIDLTALVTESRNKASENIDVLSTVEMLTVINQEDQKVALAVEAILPQIADVVDAIAVAFQSGGRLIYTGAGTSGRLGILDASECPPTYGSNPDLVVGLIAGGHKAILKAVENAEDNRELGASDLQDLGLNEKDVLVGIAASGRTPYVLGAMEYAKSVGATVATLSCNPNSPMTELADINMTPVVGPEVVTGSSRMKAGTAQKLVLNMLTTGAMIRTGKVFGNLMVDVEATNAKLVQRQKNIVIEATGCSEVEASEALSQCDNHCKTAILMVLSGLDAQSAKAKLAQHNGFIRNALSDQ.

The 164-residue stretch at 57 to 220 folds into the SIS domain; that stretch reads IAVAFQSGGR…TTGAMIRTGK (164 aa). The active-site Proton donor is the glutamate 85. Residue glutamate 116 is part of the active site.

This sequence belongs to the GCKR-like family. MurNAc-6-P etherase subfamily. As to quaternary structure, homodimer.

It carries out the reaction N-acetyl-D-muramate 6-phosphate + H2O = N-acetyl-D-glucosamine 6-phosphate + (R)-lactate. It functions in the pathway amino-sugar metabolism; 1,6-anhydro-N-acetylmuramate degradation. The protein operates within amino-sugar metabolism; N-acetylmuramate degradation. Its pathway is cell wall biogenesis; peptidoglycan recycling. Functionally, specifically catalyzes the cleavage of the D-lactyl ether substituent of MurNAc 6-phosphate, producing GlcNAc 6-phosphate and D-lactate. Together with AnmK, is also required for the utilization of anhydro-N-acetylmuramic acid (anhMurNAc) either imported from the medium or derived from its own cell wall murein, and thus plays a role in cell wall recycling. The chain is N-acetylmuramic acid 6-phosphate etherase from Aliivibrio fischeri (strain MJ11) (Vibrio fischeri).